Here is a 262-residue protein sequence, read N- to C-terminus: Malonyl-[acyl-carrier protein] O-methyltransferase (262 aa).

Belongs to the methyltransferase superfamily.

The enzyme catalyses malonyl-[ACP] + S-adenosyl-L-methionine = malonyl-[ACP] methyl ester + S-adenosyl-L-homocysteine. The protein operates within cofactor biosynthesis; biotin biosynthesis. Converts the free carboxyl group of a malonyl-thioester to its methyl ester by transfer of a methyl group from S-adenosyl-L-methionine (SAM). It allows to synthesize pimeloyl-ACP via the fatty acid synthetic pathway. This Erwinia pyrifoliae (strain DSM 12163 / CIP 106111 / Ep16/96) protein is Malonyl-[acyl-carrier protein] O-methyltransferase.